Consider the following 361-residue polypeptide: S-adenosylmethionine:tRNA ribosyltransferase-isomerase (361 aa).

The protein belongs to the QueA family. Monomer.

The protein localises to the cytoplasm. The enzyme catalyses 7-aminomethyl-7-carbaguanosine(34) in tRNA + S-adenosyl-L-methionine = epoxyqueuosine(34) in tRNA + adenine + L-methionine + 2 H(+). It participates in tRNA modification; tRNA-queuosine biosynthesis. In terms of biological role, transfers and isomerizes the ribose moiety from AdoMet to the 7-aminomethyl group of 7-deazaguanine (preQ1-tRNA) to give epoxyqueuosine (oQ-tRNA). The chain is S-adenosylmethionine:tRNA ribosyltransferase-isomerase from Actinobacillus pleuropneumoniae serotype 7 (strain AP76).